Consider the following 72-residue polypeptide: Phaiodotoxin-2 (72 aa).

The LCN-type CS-alpha/beta domain maps to 1–72; it reads KFIRHKDESF…CFGALESKCA (72 aa). Disulfide bonds link C13–C38, C23–C50, C27–C52, and C63–C71.

The protein belongs to the long (4 C-C) scorpion toxin superfamily. Sodium channel inhibitor family. As to expression, expressed by the venom gland.

The protein resides in the secreted. In terms of biological role, sodium channel (Nav) specific neurotoxin. This Anuroctonus phaiodactylus (Mafia scorpion) protein is Phaiodotoxin-2.